We begin with the raw amino-acid sequence, 384 residues long: 5-amino-6-(D-ribitylamino)uracil--L-tyrosine 4-hydroxyphenyl transferase 2 (384 aa).

The Radical SAM core domain maps to 53-286 (VSYVVNRNIY…IAISRIILHT (234 aa)). [4Fe-4S] cluster-binding residues include Cys67, Cys71, and Cys74.

Belongs to the radical SAM superfamily. CofH family. As to quaternary structure, consists of two subunits, CofG and CofH. Requires [4Fe-4S] cluster as cofactor.

It catalyses the reaction 5-amino-6-(D-ribitylamino)uracil + L-tyrosine + S-adenosyl-L-methionine = 5-amino-5-(4-hydroxybenzyl)-6-(D-ribitylimino)-5,6-dihydrouracil + 2-iminoacetate + 5'-deoxyadenosine + L-methionine + H(+). It functions in the pathway cofactor biosynthesis; coenzyme F0 biosynthesis. In terms of biological role, catalyzes the radical-mediated synthesis of 5-amino-5-(4-hydroxybenzyl)-6-(D-ribitylimino)-5,6-dihydrouracil from 5-amino-6-(D-ribitylamino)uracil and L-tyrosine. The chain is 5-amino-6-(D-ribitylamino)uracil--L-tyrosine 4-hydroxyphenyl transferase 2 from Methanosarcina acetivorans (strain ATCC 35395 / DSM 2834 / JCM 12185 / C2A).